The following is an 842-amino-acid chain: Alanine--tRNA ligase (842 aa).

His-549, His-553, Cys-650, and His-654 together coordinate Zn(2+).

This sequence belongs to the class-II aminoacyl-tRNA synthetase family. Requires Zn(2+) as cofactor.

It localises to the cytoplasm. The enzyme catalyses tRNA(Ala) + L-alanine + ATP = L-alanyl-tRNA(Ala) + AMP + diphosphate. Its function is as follows. Catalyzes the attachment of alanine to tRNA(Ala) in a two-step reaction: alanine is first activated by ATP to form Ala-AMP and then transferred to the acceptor end of tRNA(Ala). Also edits incorrectly charged Ser-tRNA(Ala) and Gly-tRNA(Ala) via its editing domain. In Campylobacter jejuni (strain RM1221), this protein is Alanine--tRNA ligase.